Here is a 481-residue protein sequence, read N- to C-terminus: UDP-glycosyltransferase 73B3 (481 aa).

Catalysis depends on histidine 21, which acts as the Proton acceptor. Histidine 21 provides a ligand contact to an anthocyanidin. Aspartate 132 (charge relay) is an active-site residue. Positions 355, 357, 372, 375, 376, 377, and 380 each coordinate UDP-alpha-D-glucose. An anthocyanidin is bound at residue alanine 395. UDP-alpha-D-glucose contacts are provided by glutamate 396 and glutamine 397.

It belongs to the UDP-glycosyltransferase family. Expressed in roots and flowers.

It catalyses the reaction a flavonol + UDP-alpha-D-glucose = a flavonol 3-O-beta-D-glucoside + UDP + H(+). Its function is as follows. Possesses quercetin 3-O-glucosyltransferase activity in vitro. Also active in vitro on benzoates and benzoate derivatives. Involved in stress or defense responses. This chain is UDP-glycosyltransferase 73B3 (UGT73B3), found in Arabidopsis thaliana (Mouse-ear cress).